The sequence spans 107 residues: Phosphoribosyl-ATP pyrophosphatase (107 aa).

It belongs to the PRA-PH family.

The protein resides in the cytoplasm. The catalysed reaction is 1-(5-phospho-beta-D-ribosyl)-ATP + H2O = 1-(5-phospho-beta-D-ribosyl)-5'-AMP + diphosphate + H(+). Its pathway is amino-acid biosynthesis; L-histidine biosynthesis; L-histidine from 5-phospho-alpha-D-ribose 1-diphosphate: step 2/9. The sequence is that of Phosphoribosyl-ATP pyrophosphatase from Rhizobium etli (strain CIAT 652).